Consider the following 165-residue polypeptide: Sporulation-specific cell division protein SsgB (165 aa).

Residues 1–21 (MLVGNSWTRSLEPVSGHEHTE) form a disordered region.

Belongs to the SsgA family. Interacts with SsgA. Interacts with FtsZ (via N-terminus).

It is found in the cell septum. Involved in sporulation-specific cell division. Required for early stages of sporulation. Important in the process of growth cessation prior to sporulation-specific cell division. Recruits cell division protein FtsZ to the future septum sites and tethers the contractile ring structure (Z ring) to the cytoplasmic membrane during sporulation. Stimulates polymerization and filament length of FtsZ in vitro. The protein is Sporulation-specific cell division protein SsgB of Kineococcus radiotolerans (strain ATCC BAA-149 / DSM 14245 / SRS30216).